The chain runs to 122 residues: Large ribosomal subunit protein uL14c (122 aa).

The protein belongs to the universal ribosomal protein uL14 family. Part of the 50S ribosomal subunit.

Its subcellular location is the plastid. It is found in the chloroplast. In terms of biological role, binds to 23S rRNA. In Manihot esculenta (Cassava), this protein is Large ribosomal subunit protein uL14c.